Here is a 496-residue protein sequence, read N- to C-terminus: Cruciferin BnC2 (496 aa).

A signal peptide spans 1 to 23 (MARLSSLLYFSITVLIFLHGSTA). Cystine bridges form between Cys-30-Cys-63 and Cys-106-Cys-313. Cupin type-1 domains are found at residues 35–269 (LNAL…RTAQ) and 319–468 (DNLD…EEAR). Phosphothreonine is present on Thr-109. The tract at residues 114-170 (SVFQPGSGSPFGEGQGQGQQGQGQGQGQGQGKGQQGQGKGQQGQSQGQQGQGQGFRD) is disordered. Residues 122–154 (SPFGEGQGQGQQGQGQGQGQGQGKGQQGQGKGQ) are compositionally biased toward gly residues. Phosphotyrosine is present on Tyr-336. Ser-338 carries the post-translational modification Phosphoserine. A Phosphothreonine modification is found at Thr-432.

The protein belongs to the 11S seed storage protein (globulins) family. In terms of assembly, hexamer; each subunit is composed of an acidic and a basic chain derived from a single precursor and linked by a disulfide bond.

In terms of biological role, this is a seed storage protein. This Brassica napus (Rape) protein is Cruciferin BnC2 (BnC2).